A 289-amino-acid chain; its full sequence is G1/S-specific cyclin-D2 (289 aa).

Positions 26-151 (VLQNLLTIEE…VVLGKLKWNL (126 aa)) constitute a Cyclin N-terminal domain. The interval 264 to 289 (DQGDGSKSEDELDQASTPTDVRDIDL) is disordered. Position 271 is a phosphoserine (serine 271). A Phosphothreonine modification is found at threonine 280.

Belongs to the cyclin family. Cyclin D subfamily. Interacts with either CDK4 or CDK6 protein kinase to form a serine/threonine kinase holoenzyme complex. The cyclin subunit imparts substrate specificity to the complex. In terms of processing, phosphorylation at Thr-280 by MAP kinases is required for ubiquitination and degradation by the DCX(AMBRA1) complex. Ubiquitinated by the DCX(AMBRA1) complex during the transition from G1 to S cell phase, leading to its degradation: ubiquitination is dependent on Thr-280 phosphorylation. The DCX(AMBRA1) complex represents the major regulator of CCND2 stability during the G1/S transition. Polyubiquitinated by the SCF(FBXL2) complex, leading to proteasomal degradation.

The protein resides in the nucleus. It localises to the cytoplasm. It is found in the nucleus membrane. In terms of biological role, regulatory component of the cyclin D2-CDK4 (DC) complex that phosphorylates and inhibits members of the retinoblastoma (RB) protein family including RB1 and regulates the cell-cycle during G(1)/S transition. Phosphorylation of RB1 allows dissociation of the transcription factor E2F from the RB/E2F complex and the subsequent transcription of E2F target genes which are responsible for the progression through the G(1) phase. Hypophosphorylates RB1 in early G(1) phase. Cyclin D-CDK4 complexes are major integrators of various mitogenenic and antimitogenic signals. In Bos taurus (Bovine), this protein is G1/S-specific cyclin-D2 (CCND2).